Reading from the N-terminus, the 503-residue chain is ATP synthase subunit alpha, chloroplastic (503 aa).

170 to 177 (GDRQTGKT) serves as a coordination point for ATP.

It belongs to the ATPase alpha/beta chains family. F-type ATPases have 2 components, CF(1) - the catalytic core - and CF(0) - the membrane proton channel. CF(1) has five subunits: alpha(3), beta(3), gamma(1), delta(1), epsilon(1). CF(0) has four main subunits: a, b, b' and c.

The protein localises to the plastid. It localises to the chloroplast thylakoid membrane. It catalyses the reaction ATP + H2O + 4 H(+)(in) = ADP + phosphate + 5 H(+)(out). In terms of biological role, produces ATP from ADP in the presence of a proton gradient across the membrane. The alpha chain is a regulatory subunit. This is ATP synthase subunit alpha, chloroplastic from Gracilaria tenuistipitata var. liui (Red alga).